Here is a 313-residue protein sequence, read N- to C-terminus: Adhesin MafA 2 (313 aa).

The N-terminal stretch at 1–14 is a signal peptide; it reads MKTLLLLIPLVLTA. Cys15 carries the N-palmitoyl cysteine lipid modification. Residue Cys15 is the site of S-diacylglycerol cysteine attachment. Residues 282 to 297 are compositionally biased toward polar residues; sequence GDTTAQNRPDFKQNNG. Residues 282–313 form a disordered region; that stretch reads GDTTAQNRPDFKQNNGKKPDVGNEVIRRRKGG.

This sequence belongs to the MafA family.

The protein localises to the cell outer membrane. This is Adhesin MafA 2 (mafA2) from Neisseria meningitidis serogroup C / serotype 2a (strain ATCC 700532 / DSM 15464 / FAM18).